Reading from the N-terminus, the 551-residue chain is Interferon-induced, double-stranded RNA-activated protein kinase (551 aa).

An N-acetylalanine modification is found at alanine 2. The tract at residues 2-180 (AGDLSAGFFM…SVKSDYLSSG (179 aa)) is (Microbial infection) Interaction with HCV NS5A. Residues 9–77 (FFMEELNTYR…AKLAVEILNK (69 aa)) enclose the DRBM 1 domain. A Glycyl lysine isopeptide (Lys-Gly) (interchain with G-Cter in ISG15) cross-link involves residue lysine 69. Serine 83 carries the post-translational modification Phosphoserine. Phosphothreonine; by autocatalysis is present on residues threonine 88, threonine 89, and threonine 90. The 68-residue stretch at 100–167 (NYIGLINRIA…AKLAYLQILS (68 aa)) folds into the DRBM 2 domain. Residue tyrosine 101 is modified to Phosphotyrosine; by autocatalysis. Residue lysine 159 forms a Glycyl lysine isopeptide (Lys-Gly) (interchain with G-Cter in ISG15) linkage. Tyrosine 162 is modified (phosphotyrosine; by autocatalysis). The segment covering 202-215 (SSSEGDFSADTSEI) has biased composition (polar residues). The interval 202–222 (SSSEGDFSADTSEINSNSDSL) is disordered. Serine 242 is subject to Phosphoserine; by autocatalysis. Phosphothreonine; by autocatalysis occurs at positions 255 and 258. The tract at residues 266 to 362 (DFKEIELIGS…NSSRSKTKCL (97 aa)) is dimerization. The segment at 266-551 (DFKEIELIGS…SPEKNERHTC (286 aa)) is interaction with TRAF5. One can recognise a Protein kinase domain in the interval 267–538 (FKEIELIGSG…TSEILRTLTV (272 aa)). 273 to 281 (IGSGGFGQV) contacts ATP. At tyrosine 293 the chain carries Phosphotyrosine; by autocatalysis. Lysine 296 serves as a coordination point for ATP. A run of 2 repeats spans residues 331–343 (DYDPETSDDSLES) and 345–357 (DYDPENSKNSSRS). Positions 331 to 357 (DYDPETSDDSLESSDYDPENSKNSSRS) are 2 X 13 AA approximate repeats. The segment at 379–496 (EKRRGEKLDK…TAFETSKFFT (118 aa)) is interaction with EIF2S1/EIF-2ALPHA. The active-site Proton acceptor is aspartate 414. Aspartate 432 lines the Mg(2+) pocket. 2 positions are modified to phosphothreonine; by autocatalysis: threonine 446 and threonine 451. 2 positions are modified to phosphoserine: serine 456 and serine 542.

Belongs to the protein kinase superfamily. Ser/Thr protein kinase family. GCN2 subfamily. In terms of assembly, homodimer. Interacts with STRBP. Interacts with DNAJC3. Forms a complex with FANCA, FANCC, FANCG and HSP70. Interacts with ADAR/ADAR1. Interacts with IRS1. The inactive form interacts with NCK1 and GSN. Interacts (via the kinase catalytic domain) with STAT3 (via SH2 domain), TRAF2 (C-terminus), TRAF5 (C-terminus) and TRAF6 (C-terminus). Interacts with MAP2K6, IKBKB/IKKB, NPM1, TARBP2, NLRP1, NLRP3, NLRC4 and AIM2. Interacts (via DRBM 1 domain) with DUS2L (via DRBM domain). Interacts with DHX9 (via N-terminus) and this interaction is dependent upon activation of the kinase. Interacts with EIF2S1/EIF-2ALPHA; this interaction induces a conformational change in EIF2S1 and its phosphorylation by EIF2AK2. (Microbial infection) Interacts with human cytomegalovirus (HCMV) TRS1; this interaction retains EIF2AK2 to the nucleus and prevents its activation. As to quaternary structure, (Microbial infection) Interacts with vaccinia virus protein K3 (K3L); this interaction inhibits EIF2AK2. In terms of assembly, (Microbial infection) Interacts with human herpes simplex virus 1 (HHV-1) protein US11 in an RNA-dependent manner. (Microbial infection) The inactive form interacts with Toscana virus (TOS) NSS. As to quaternary structure, (Microbial infection) Interacts with herpes virus 8 protein v-IRF2; this interaction inhibits EIF2AK2 activation. In terms of assembly, (Microbial infection) Interacts with vaccinia protein E3. (Microbial infection) Interacts (via N-terminus) with Hepatitis C virus (HCV) mature core protein (via N-terminus); this interaction induces the autophosphorylation of EIF2AK2. As to quaternary structure, (Microbial infection) Interacts with Hepatitis C virus (HCV) non-structural protein 5A (NS5A); this interaction leads to disruption of EIF2AK2 dimerization by NS5A. In terms of assembly, (Microbial infection) Interacts with Hepatitis C virus (HCV) envelope glycoprotein E2; this interaction inhibits EIF2AK2 and blocks its inhibitory effect on protein synthesis and cell growth. (Microbial infection) Interacts with human respiratory syncytial virus (HRSV) nucleoprotein; this interaction inhibits EIF2AK2 phosphorylation of EIF2S1 and blocks EIF2AK2-mediated translation shutoff. As to quaternary structure, (Microbial infection) Interacts with human herpesvirus 8 protein MTA/ORF57; this interaction inhibits stress granule formation. Mg(2+) serves as cofactor. In terms of processing, autophosphorylated on several Ser, Thr and Tyr residues. Autophosphorylation of Thr-451 is dependent on Thr-446 and is stimulated by dsRNA binding and dimerization. Autophosphorylation apparently leads to the activation of the kinase. Tyrosine autophosphorylation is essential for efficient dsRNA-binding, dimerization, and kinase activation. As to expression, highly expressed in thymus, spleen and bone marrow compared to non-hematopoietic tissues such as small intestine, liver, or kidney tissues. Colocalizes with GSK3B and TAU in the Alzheimer disease (AD) brain. Elevated levels seen in breast and colon carcinomas, and which correlates with tumor progression and invasiveness or risk of progression.

Its subcellular location is the cytoplasm. It is found in the nucleus. It localises to the perinuclear region. It carries out the reaction L-seryl-[protein] + ATP = O-phospho-L-seryl-[protein] + ADP + H(+). It catalyses the reaction L-threonyl-[protein] + ATP = O-phospho-L-threonyl-[protein] + ADP + H(+). The catalysed reaction is L-tyrosyl-[protein] + ATP = O-phospho-L-tyrosyl-[protein] + ADP + H(+). Its activity is regulated as follows. Initially produced in an inactive form and is activated by binding to viral dsRNA, which causes dimerization and autophosphorylation in the activation loop and stimulation of function. ISGylation can activate it in the absence of viral infection. Can also be activated by heparin, pro-inflammatory stimuli, growth factors, cytokines, oxidative stress and the cellular protein PRKRA. Activity is markedly stimulated by manganese ions. Activation is blocked by the viral components HIV-1 Tat protein and large amounts of HIV-1 trans-activation response (TAR) RNA element as well as by the cellular proteins TARBP2, DUS2L, NPM1, NCK1 and ADAR. Down-regulated by Toscana virus (TOS) and Rift valley fever virus (RVFV) NSS which promote its proteasomal degradation. Inhibited by vaccinia virus protein E3, probably via dsRNA sequestering. In terms of biological role, IFN-induced dsRNA-dependent serine/threonine-protein kinase that phosphorylates the alpha subunit of eukaryotic translation initiation factor 2 (EIF2S1/eIF-2-alpha) and plays a key role in the innate immune response to viral infection. Inhibits viral replication via the integrated stress response (ISR): EIF2S1/eIF-2-alpha phosphorylation in response to viral infection converts EIF2S1/eIF-2-alpha in a global protein synthesis inhibitor, resulting to a shutdown of cellular and viral protein synthesis, while concomitantly initiating the preferential translation of ISR-specific mRNAs, such as the transcriptional activator ATF4. Exerts its antiviral activity on a wide range of DNA and RNA viruses including hepatitis C virus (HCV), hepatitis B virus (HBV), measles virus (MV) and herpes simplex virus 1 (HHV-1). Also involved in the regulation of signal transduction, apoptosis, cell proliferation and differentiation: phosphorylates other substrates including p53/TP53, PPP2R5A, DHX9, ILF3, IRS1 and the HHV-1 viral protein US11. In addition to serine/threonine-protein kinase activity, also has tyrosine-protein kinase activity and phosphorylates CDK1 at 'Tyr-4' upon DNA damage, facilitating its ubiquitination and proteasomal degradation. Either as an adapter protein and/or via its kinase activity, can regulate various signaling pathways (p38 MAP kinase, NF-kappa-B and insulin signaling pathways) and transcription factors (JUN, STAT1, STAT3, IRF1, ATF3) involved in the expression of genes encoding pro-inflammatory cytokines and IFNs. Activates the NF-kappa-B pathway via interaction with IKBKB and TRAF family of proteins and activates the p38 MAP kinase pathway via interaction with MAP2K6. Can act as both a positive and negative regulator of the insulin signaling pathway (ISP). Negatively regulates ISP by inducing the inhibitory phosphorylation of insulin receptor substrate 1 (IRS1) at 'Ser-312' and positively regulates ISP via phosphorylation of PPP2R5A which activates FOXO1, which in turn up-regulates the expression of insulin receptor substrate 2 (IRS2). Can regulate NLRP3 inflammasome assembly and the activation of NLRP3, NLRP1, AIM2 and NLRC4 inflammasomes. Plays a role in the regulation of the cytoskeleton by binding to gelsolin (GSN), sequestering the protein in an inactive conformation away from actin. The chain is Interferon-induced, double-stranded RNA-activated protein kinase (EIF2AK2) from Homo sapiens (Human).